The primary structure comprises 398 residues: Circumsporozoite protein (398 aa).

The N-terminal stretch at 1–23 is a signal peptide; the sequence is MKNFNLLAVSSILLVDLFRTQWG. Positions 50-110 are disordered; sequence AQVRQSASRG…AAAGEAGNNA (61 aa). Residues 66-93 are compositionally biased toward basic and acidic residues; that stretch reads PKNEEGADKPKKKDEKQVEPKKPRENKL. The required for the binding to heparan sulfate proteoglycans (HSPGs) on the surface of host hepatocytes stretch occupies residues 81–89; that stretch reads KQVEPKKPR. The region I; contains the proteolytic cleavage site stretch occupies residues 92–96; the sequence is KLKQP. 19 tandem repeats follow at residues 97 to 105, 106 to 114, 115 to 123, 124 to 132, 133 to 141, 142 to 150, 151 to 159, 160 to 168, 169 to 177, 178 to 186, 187 to 195, 196 to 204, 205 to 213, 214 to 222, 223 to 231, 232 to 240, 241 to 257, 258 to 274, and 275 to 291. Over residues 97–110 the composition is skewed to low complexity; it reads AGNNAAAGEAGNNA. The tract at residues 97-240 is 16 X 9 AA tandem repeats of A-G-N-N-A-A-[AG]-G-[EA]; the sequence is AGNNAAAGEA…AAGNNAAAGA (144 aa). A 3 X 17 AA tandem repeats of A-G-N-N-A-A-A-G-E-A-G-A-G-G-A-G-[RG] region spans residues 241–291; sequence AGNNAAAGEAGAGGAGRAGNNAAAGEAGAGGAGRAGNNAAAGEAGAGGAGG. The interval 248 to 310 is disordered; that stretch reads GEAGAGGAGR…AGQGQNNGGA (63 aa). Gly residues predominate over residues 284–293; that stretch reads AGAGGAGGNA. The TSP type-1 domain occupies 324–376; the sequence is KIRSTIGVEWSPCSVTCGKGVRMRRKVNAANKKPEELDANDLETEVCTMDKCA. 2 disulfide bridges follow: Cys336-Cys370 and Cys340-Cys375. A glycan (O-linked (Fuc) threonine) is linked at Thr339. A lipid anchor (GPI-anchor amidated cysteine) is attached at Cys375. The propeptide at 376–398 is removed in mature form; sequence AGIFNVVSNSLGLVILLVLALFN.

Belongs to the plasmodium circumsporozoite protein family. In terms of processing, during host cell invasion, proteolytically cleaved at the cell membrane in the region I by a papain-like cysteine protease of parasite origin. Cleavage is triggered by the sporozoite contact with highly sulfated heparan sulfate proteoglycans (HSPGs) present on the host hepatocyte cell surface. Cleavage exposes the TSP type-1 (TSR) domain and is required for productive invasion of host hepatocytes but not for adhesion to the host cell membrane. Cleavage is dispensable for sporozoite development in the oocyst, motility and for traversal of host and vector cells. O-glycosylated; maybe by POFUT2.

It localises to the cell membrane. The protein resides in the cytoplasm. Essential sporozoite protein. In the mosquito vector, required for sporozoite development in the oocyst, migration through the vector hemolymph and entry into the vector salivary glands. In the vertebrate host, required for sporozoite migration through the host dermis and infection of host hepatocytes. Binds to highly sulfated heparan sulfate proteoglycans (HSPGs) on the surface of host hepatocytes. In terms of biological role, in the vertebrate host, binds to highly sulfated heparan sulfate proteoglycans (HSPGs) on the surface of host hepatocytes and is required for sporozoite invasion of the host hepatocytes. This is Circumsporozoite protein from Plasmodium cynomolgi (strain Ceylon).